The primary structure comprises 436 residues: Bifunctional protein GlmU (436 aa).

Positions 1–226 are pyrophosphorylase; sequence MNEISIIILA…ETNFMGINDK (226 aa). UDP-N-acetyl-alpha-D-glucosamine-binding positions include 9–12, Lys23, Gln75, and 82–83; these read LAAG and GT. Position 105 (Asp105) interacts with Mg(2+). UDP-N-acetyl-alpha-D-glucosamine contacts are provided by Gly138, Glu152, Asn167, and Asn224. Asn224 is a binding site for Mg(2+). Residues 227–247 are linker; that stretch reads FALSIAEEIMQNRIKENLMKN. The segment at 248–436 is N-acetyltransferase; sequence GVIMSLPDTI…YKFFGKNDEK (189 aa). Residues Arg311 and Lys328 each coordinate UDP-N-acetyl-alpha-D-glucosamine. Catalysis depends on His339, which acts as the Proton acceptor. The UDP-N-acetyl-alpha-D-glucosamine site is built by Tyr342 and Asn353. Residues 362-363, Ser381, Ala399, and Arg416 each bind acetyl-CoA; that span reads NY.

In the N-terminal section; belongs to the N-acetylglucosamine-1-phosphate uridyltransferase family. The protein in the C-terminal section; belongs to the transferase hexapeptide repeat family. Homotrimer. Mg(2+) serves as cofactor.

The protein localises to the cytoplasm. It carries out the reaction alpha-D-glucosamine 1-phosphate + acetyl-CoA = N-acetyl-alpha-D-glucosamine 1-phosphate + CoA + H(+). The catalysed reaction is N-acetyl-alpha-D-glucosamine 1-phosphate + UTP + H(+) = UDP-N-acetyl-alpha-D-glucosamine + diphosphate. The protein operates within nucleotide-sugar biosynthesis; UDP-N-acetyl-alpha-D-glucosamine biosynthesis; N-acetyl-alpha-D-glucosamine 1-phosphate from alpha-D-glucosamine 6-phosphate (route II): step 2/2. It functions in the pathway nucleotide-sugar biosynthesis; UDP-N-acetyl-alpha-D-glucosamine biosynthesis; UDP-N-acetyl-alpha-D-glucosamine from N-acetyl-alpha-D-glucosamine 1-phosphate: step 1/1. Its pathway is bacterial outer membrane biogenesis; LPS lipid A biosynthesis. Functionally, catalyzes the last two sequential reactions in the de novo biosynthetic pathway for UDP-N-acetylglucosamine (UDP-GlcNAc). The C-terminal domain catalyzes the transfer of acetyl group from acetyl coenzyme A to glucosamine-1-phosphate (GlcN-1-P) to produce N-acetylglucosamine-1-phosphate (GlcNAc-1-P), which is converted into UDP-GlcNAc by the transfer of uridine 5-monophosphate (from uridine 5-triphosphate), a reaction catalyzed by the N-terminal domain. This Campylobacter fetus subsp. fetus (strain 82-40) protein is Bifunctional protein GlmU.